The chain runs to 86 residues: Small ribosomal subunit protein uS15 (86 aa).

A compositionally biased stretch (polar residues) spans 1 to 10 (MSIDTQSIIE). The segment at 1-21 (MSIDTQSIIENNKRSAHDTGS) is disordered.

The protein belongs to the universal ribosomal protein uS15 family. In terms of assembly, part of the 30S ribosomal subunit. Forms a bridge to the 50S subunit in the 70S ribosome, contacting the 23S rRNA.

One of the primary rRNA binding proteins, it binds directly to 16S rRNA where it helps nucleate assembly of the platform of the 30S subunit by binding and bridging several RNA helices of the 16S rRNA. In terms of biological role, forms an intersubunit bridge (bridge B4) with the 23S rRNA of the 50S subunit in the ribosome. This Xylella fastidiosa (strain M23) protein is Small ribosomal subunit protein uS15.